A 403-amino-acid polypeptide reads, in one-letter code: Na(+)-translocating NADH-quinone reductase subunit B (403 aa).

Transmembrane regions (helical) follow at residues 56 to 76 (MMIT…WNTG), 121 to 141 (AYFL…EVLF), 163 to 183 (ILPP…GVVI), 220 to 240 (WTAV…SGGI), 265 to 285 (TSTL…IASW), 287 to 307 (IVSG…LIGS), 312 to 332 (MFAM…GMFF), 348 to 368 (WIFG…NPAF), and 371 to 391 (GMML…HFVV). FMN phosphoryl threonine is present on Thr-230.

It belongs to the NqrB/RnfD family. Composed of six subunits; NqrA, NqrB, NqrC, NqrD, NqrE and NqrF. It depends on FMN as a cofactor.

Its subcellular location is the cell inner membrane. It carries out the reaction a ubiquinone + n Na(+)(in) + NADH + H(+) = a ubiquinol + n Na(+)(out) + NAD(+). In terms of biological role, NQR complex catalyzes the reduction of ubiquinone-1 to ubiquinol by two successive reactions, coupled with the transport of Na(+) ions from the cytoplasm to the periplasm. NqrA to NqrE are probably involved in the second step, the conversion of ubisemiquinone to ubiquinol. The protein is Na(+)-translocating NADH-quinone reductase subunit B of Ectopseudomonas mendocina (strain ymp) (Pseudomonas mendocina).